The sequence spans 89 residues: Sodium channel toxin To13 (89 aa).

The N-terminal stretch at 1–18 is a signal peptide; sequence MKTLFLIITSFILLEVEG. Residues 20–87 form the LCN-type CS-alpha/beta domain; the sequence is KNGYPRDSKG…TWKNKEPKCK (68 aa). Cystine bridges form between cysteine 30/cysteine 86, cysteine 34/cysteine 60, cysteine 45/cysteine 67, and cysteine 49/cysteine 69.

Belongs to the long (4 C-C) scorpion toxin superfamily. Sodium channel inhibitor family. In terms of tissue distribution, expressed by the venom gland.

Its subcellular location is the secreted. In terms of biological role, inhibits voltage-gated sodium channels (Nav). The protein is Sodium channel toxin To13 of Tityus obscurus (Amazonian scorpion).